Consider the following 352-residue polypeptide: UDP-3-O-acylglucosamine N-acyltransferase (352 aa).

Residue histidine 244 is the Proton acceptor of the active site.

The protein belongs to the transferase hexapeptide repeat family. LpxD subfamily. As to quaternary structure, homotrimer.

The catalysed reaction is a UDP-3-O-[(3R)-3-hydroxyacyl]-alpha-D-glucosamine + a (3R)-hydroxyacyl-[ACP] = a UDP-2-N,3-O-bis[(3R)-3-hydroxyacyl]-alpha-D-glucosamine + holo-[ACP] + H(+). Its pathway is bacterial outer membrane biogenesis; LPS lipid A biosynthesis. Functionally, catalyzes the N-acylation of UDP-3-O-acylglucosamine using 3-hydroxyacyl-ACP as the acyl donor. Is involved in the biosynthesis of lipid A, a phosphorylated glycolipid that anchors the lipopolysaccharide to the outer membrane of the cell. This Anaeromyxobacter sp. (strain Fw109-5) protein is UDP-3-O-acylglucosamine N-acyltransferase.